The sequence spans 250 residues: Proteasome subunit alpha type-4-A (250 aa).

Residues lysine 40 and lysine 64 each participate in a glycyl lysine isopeptide (Lys-Gly) (interchain with G-Cter in ubiquitin) cross-link.

It belongs to the peptidase T1A family. Component of the 20S core complex of the 26S proteasome. The 26S proteasome is composed of a core protease (CP), known as the 20S proteasome, capped at one or both ends by the 19S regulatory particle (RP/PA700). The 20S proteasome core is composed of 28 subunits that are arranged in four stacked rings, resulting in a barrel-shaped structure. The two end rings are each formed by seven alpha subunits, and the two central rings are each formed by seven beta subunits. The catalytic chamber with the active sites is on the inside of the barrel. In terms of tissue distribution, ubiquitous low levels, higher expression in siliques and flowers.

The protein localises to the cytoplasm. It is found in the nucleus. The proteasome is a multicatalytic proteinase complex which is characterized by its ability to cleave peptides with Arg, Phe, Tyr, Leu, and Glu adjacent to the leaving group at neutral or slightly basic pH. The proteasome has an ATP-dependent proteolytic activity. The sequence is that of Proteasome subunit alpha type-4-A (PAC1) from Arabidopsis thaliana (Mouse-ear cress).